The sequence spans 353 residues: uncharacterized protein (353 aa).

Residues 1 to 24 (MRVVERAVIACYLGITIFSGIAFG) form the signal peptide.

This sequence belongs to the chlamydial CPn_1058/CT_355/TC_0634 family.

This is an uncharacterized protein from Chlamydia trachomatis serovar D (strain ATCC VR-885 / DSM 19411 / UW-3/Cx).